The primary structure comprises 881 residues: MGCLGNQLLIAILLLSVYGIYCTQYVTVFYGVPAWRNATIPLFCATKNRDTWGTTQCLPDNGDYSELALNVTESFDAWENTVTEQAIEDVWQLFETSIKPCVKLSPLCITMRCNKSETDRWGLTKSSTTITTAAPTSAPVSEKIDMVNETSSCIAQNNCTGLEQEQMISCKFTMTGLKRDKTKEYNETWYSTDLVCEQGNSTDNESRCYMNHCNTSVIQESCDKHYWDTIRFRYCAPPGYALLRCNDTNYSGFMPKCSKVVVSSCTRMMETQTSTWFGFNGTRAENRTYIYWHGRDNRTIISLNKYYNLTMKCRRPGNKTVLPVTIMSGLVFHSQPINDRPKQAWCWFGGKWKDAIKEVKQTIVKHPRYTGTNNTDKINLTAPGGGDPEVTFMWTNCRGEFLYCKMNWFLNWVEDRDVTTQRPKERHRRNYVPCHIRQIINTWHKVGKNVYLPPREGDLTCNSTVTSLIANIDWTDGNQTSITMSAEVAELYRLELGDYKLVEITPIGLAPTDVKRYTTGGTSRNKRGVFVLGFLGFLATAGSAMGAASLTLTAQSRTLLAGIVQQQQQLLDVVKRQQELLRLTVWGTKNLQTRVTAIEKYLKDQAQLNAWGCAFRQVCHTTVPWPNASLTPDWNNDTWQEWERKVDFLEENITALLEEAQIQQEKNMYELQKLNSWDVFGNWFDLASWIKYIQYGIYVVVGVILLRIVIYIVQMLAKLRQGYRPVFSSPPSYFQXTHTQQDPALPTREGKEGDGGEGGGNSSWPWQIEYIHFLIRQLIRLLTWLFSNCRTLLSRAYQILQPILQRLSATLRRVREVLRTELTYLQYGWSYFHEAVQAGWRSATETLAGAWRDLWETLRRGGRWILAIPRRIRQGLELTLL.

The first 19 residues, 1 to 19, serve as a signal peptide directing secretion; sequence MGCLGNQLLIAILLLSVYG. Residues 20–696 are Extracellular-facing; it reads IYCTQYVTVF…ASWIKYIQYG (677 aa). Asparagine 37 carries N-linked (GlcNAc...) asparagine; by host glycosylation. The cysteines at positions 44 and 57 are disulfide-linked. 17 N-linked (GlcNAc...) asparagine; by host glycosylation sites follow: asparagine 70, asparagine 114, asparagine 148, asparagine 158, asparagine 186, asparagine 200, asparagine 204, asparagine 214, asparagine 246, asparagine 249, asparagine 280, asparagine 286, asparagine 297, asparagine 308, asparagine 318, asparagine 373, and asparagine 379. Disulfide bonds link cysteine 101–cysteine 222, cysteine 108–cysteine 213, cysteine 113–cysteine 170, cysteine 235–cysteine 265, and cysteine 245–cysteine 257. The tract at residues 113–169 is V1; sequence CNKSETDRWGLTKSSTTITTAAPTSAPVSEKIDMVNETSSCIAQNNCTGLEQEQMIS. The interval 170–213 is V2; the sequence is CKFTMTGLKRDKTKEYNETWYSTDLVCEQGNSTDNESRCYMNHC. The V3 stretch occupies residues 313–345; the sequence is CRRPGNKTVLPVTIMSGLVFHSQPINDRPKQAW. Cysteine 313 and cysteine 346 form a disulfide bridge. 2 disulfides stabilise this stretch: cysteine 397–cysteine 461 and cysteine 404–cysteine 434. Positions 404-434 are V4; that stretch reads CKMNWFLNWVEDRDVTTQRPKERHRRNYVPC. 2 N-linked (GlcNAc...) asparagine; by host glycosylation sites follow: asparagine 462 and asparagine 478. A V5 region spans residues 477–484; the sequence is GNQTSITM. The segment at 528 to 548 is fusion peptide; it reads GVFVLGFLGFLATAGSAMGAA. The immunosuppression stretch occupies residues 591-607; sequence LQTRVTAIEKYLKDQAQ. N-linked (GlcNAc...) asparagine; by host glycosylation is found at asparagine 627, asparagine 636, and asparagine 652. Residues 636 to 668 adopt a coiled-coil conformation; that stretch reads NDTWQEWERKVDFLEENITALLEEAQIQQEKNM. Residues 673–694 form an MPER; binding to GalCer region; it reads KLNSWDVFGNWFDLASWIKYIQ. The chain crosses the membrane as a helical span at residues 697–717; the sequence is IYVVVGVILLRIVIYIVQMLA. Topologically, residues 718 to 881 are cytoplasmic; sequence KLRQGYRPVF…IRQGLELTLL (164 aa). Positions 723–726 match the YXXV motif; contains endocytosis signal motif; that stretch reads YRPV. A disordered region spans residues 737 to 761; that stretch reads THTQQDPALPTREGKEGDGGEGGGN. Cysteine 789 is lipidated: S-palmitoyl cysteine; by host. The Di-leucine internalization motif signature appears at 880–881; the sequence is LL.

As to quaternary structure, the mature envelope protein (Env) consists of a homotrimer of non-covalently associated gp120-gp41 heterodimers. The resulting complex protrudes from the virus surface as a spike. Interacts with host CD4 and CCR5. Gp120 also interacts with the C-type lectins CD209/DC-SIGN and CLEC4M/DC-SIGNR (collectively referred to as DC-SIGN(R)). The mature envelope protein (Env) consists of a homotrimer of non-covalently associated gp120-gp41 heterodimers. The resulting complex protrudes from the virus surface as a spike. Specific enzymatic cleavages in vivo yield mature proteins. Envelope glycoproteins are synthesized as an inactive precursor that is heavily N-glycosylated and processed likely by host cell furin in the Golgi to yield the mature SU and TM proteins. The cleavage site between SU and TM requires the minimal sequence [KR]-X-[KR]-R. Post-translationally, palmitoylation of the transmembrane protein and of Env polyprotein (prior to its proteolytic cleavage) is essential for their association with host cell membrane lipid rafts. Palmitoylation is therefore required for envelope trafficking to classical lipid rafts, but not for viral replication.

It is found in the virion membrane. The protein resides in the host cell membrane. Its subcellular location is the host endosome membrane. In terms of biological role, the surface protein gp120 (SU) attaches the virus to the host lymphoid cell by binding to the primary receptor CD4. This interaction induces a structural rearrangement creating a high affinity binding site for a chemokine coreceptor like CCR5. This peculiar 2 stage receptor-interaction strategy allows gp120 to maintain the highly conserved coreceptor-binding site in a cryptic conformation, protected from neutralizing antibodies. These changes are transmitted to the transmembrane protein gp41 and are thought to activate its fusogenic potential by unmasking its fusion peptide. Its function is as follows. Surface protein gp120 (SU) may target the virus to gut-associated lymphoid tissue (GALT) by binding host ITGA4/ITGB7 (alpha-4/beta-7 integrins), a complex that mediates T-cell migration to the GALT. Interaction between gp120 and ITGA4/ITGB7 would allow the virus to enter GALT early in the infection, infecting and killing most of GALT's resting CD4+ T-cells. This T-cell depletion is believed to be the major insult to the host immune system leading to AIDS. Functionally, the surface protein gp120 is a ligand for CD209/DC-SIGN and CLEC4M/DC-SIGNR, which are respectively found on dendritic cells (DCs), and on endothelial cells of liver sinusoids and lymph node sinuses. These interactions allow capture of viral particles at mucosal surfaces by these cells and subsequent transmission to permissive cells. DCs are professional antigen presenting cells, critical for host immunity by inducing specific immune responses against a broad variety of pathogens. They act as sentinels in various tissues where they take up antigen, process it, and present it to T-cells following migration to lymphoid organs. SIV subverts the migration properties of dendritic cells to gain access to CD4+ T-cells in lymph nodes. Virus transmission to permissive T-cells occurs either in trans (without DCs infection, through viral capture and transmission), or in cis (following DCs productive infection, through the usual CD4-gp120 interaction), thereby inducing a robust infection. In trans infection, bound virions remain infectious over days and it is proposed that they are not degraded, but protected in non-lysosomal acidic organelles within the DCs close to the cell membrane thus contributing to the viral infectious potential during DCs' migration from the periphery to the lymphoid tissues. On arrival at lymphoid tissues, intact virions recycle back to DCs' cell surface allowing virus transmission to CD4+ T-cells. Virion capture also seems to lead to MHC-II-restricted viral antigen presentation, and probably to the activation of SIV-specific CD4+ cells. The transmembrane protein gp41 (TM) acts as a class I viral fusion protein. Under the current model, the protein has at least 3 conformational states: pre-fusion native state, pre-hairpin intermediate state, and post-fusion hairpin state. During fusion of viral and target intracellular membranes, the coiled coil regions (heptad repeats) assume a trimer-of-hairpins structure, positioning the fusion peptide in close proximity to the C-terminal region of the ectodomain. The formation of this structure appears to drive apposition and subsequent fusion of viral and target cell membranes. Complete fusion occurs in host cell endosomes. The virus undergoes clathrin-dependent internalization long before endosomal fusion, thus minimizing the surface exposure of conserved viral epitopes during fusion and reducing the efficacy of inhibitors targeting these epitopes. Membranes fusion leads to delivery of the nucleocapsid into the cytoplasm. In terms of biological role, the envelope glycoprotein gp160 precursor down-modulates cell surface CD4 antigen by interacting with it in the endoplasmic reticulum and blocking its transport to the cell surface. Its function is as follows. The gp120-gp41 heterodimer allows rapid transcytosis of the virus through CD4 negative cells such as simple epithelial monolayers of the intestinal, rectal and endocervical epithelial barriers. Both gp120 and gp41 specifically recognize glycosphingolipids galactosyl-ceramide (GalCer) or 3' sulfo-galactosyl-ceramide (GalS) present in the lipid rafts structures of epithelial cells. Binding to these alternative receptors allows the rapid transcytosis of the virus through the epithelial cells. This transcytotic vesicle-mediated transport of virions from the apical side to the basolateral side of the epithelial cells does not involve infection of the cells themselves. The polypeptide is Envelope glycoprotein gp160 (env) (Cercopithecidae (Old World monkeys)).